A 659-amino-acid chain; its full sequence is Cysteine-rich receptor-like protein kinase 18 (659 aa).

The N-terminal stretch at 1 to 27 is a signal peptide; that stretch reads MATKSCELVLCFFVFFVISFSAISVSA. Gnk2-homologous domains are found at residues 28-131 and 137-250; these read QTCD…NRPF and MDPL…VYPF. Over 28–287 the chain is Extracellular; it reads QTCDNTTGTF…KNDSRISGGK (260 aa). Residues Asn32, Asn57, Asn152, Asn162, Asn179, Asn180, Asn197, Asn275, and Asn279 are each glycosylated (N-linked (GlcNAc...) asparagine). Residues 288-308 traverse the membrane as a helical segment; that stretch reads IAAIVVVTVVTIILVVLGFVI. Over 309 to 659 the chain is Cytoplasmic; it reads SNRRKQKQEM…EATITDVNPR (351 aa). Residues 339-611 enclose the Protein kinase domain; the sequence is FSERNKLGKG…PTMSTIHQML (273 aa). ATP contacts are provided by residues 345–353 and Lys367; that span reads LGKGGFGEV. Tyr412 carries the post-translational modification Phosphotyrosine. Asp464 functions as the Proton acceptor in the catalytic mechanism. Ser468 bears the Phosphoserine mark. Residue Thr504 is modified to Phosphothreonine. Phosphotyrosine is present on Tyr512.

Belongs to the protein kinase superfamily. Ser/Thr protein kinase family. CRK subfamily.

It is found in the membrane. It carries out the reaction L-seryl-[protein] + ATP = O-phospho-L-seryl-[protein] + ADP + H(+). The enzyme catalyses L-threonyl-[protein] + ATP = O-phospho-L-threonyl-[protein] + ADP + H(+). This chain is Cysteine-rich receptor-like protein kinase 18 (CRK18), found in Arabidopsis thaliana (Mouse-ear cress).